Here is a 983-residue protein sequence, read N- to C-terminus: UPF0182 protein KRH_08700 (983 aa).

The next 7 membrane-spanning stretches (helical) occupy residues 22–42, 67–87, 116–136, 172–192, 213–233, 261–281, and 288–308; these read GALLPTVIAVVVLIALFVGFT, VIGLFVAAALIVAALMFLSLW, VVMVAVPLIFGLFAASTVATQ, LLIGFLVTALLLAGVAGLLMH, VHLGSIVAAFLALQAVNFWLD, GILAVAALLVAVLFVVAGFIG, and IGAAMLVVVAVVAGGLYPWAI. A disordered region spans residues 893-959; it reads GAKTDTGAGV…DKAMKDGDWT (67 aa). Over residues 947–959 the composition is skewed to basic and acidic residues; sequence QDSDKAMKDGDWT.

This sequence belongs to the UPF0182 family.

It is found in the cell membrane. The polypeptide is UPF0182 protein KRH_08700 (Kocuria rhizophila (strain ATCC 9341 / DSM 348 / NBRC 103217 / DC2201)).